The sequence spans 74 residues: Protein F9 homolog (74 aa).

Residues 1 to 34 (GHAAANCALARVATALTRRVPASRHGLAEGGTPP) are Virion surface-facing. The chain crosses the membrane as a helical span at residues 35–55 (WTLLLAVAAVAVLGVVAISLL). The Intravirion segment spans residues 56-73 (RRALRIRFRYSKSIQTLR).

It belongs to the chordopoxvirinae L1 protein family.

The protein resides in the virion membrane. The chain is Protein F9 homolog from Capra hircus (Goat).